Reading from the N-terminus, the 340-residue chain is Phosphoribosylformylglycinamidine cyclo-ligase (340 aa).

This sequence belongs to the AIR synthase family.

It localises to the cytoplasm. It catalyses the reaction 2-formamido-N(1)-(5-O-phospho-beta-D-ribosyl)acetamidine + ATP = 5-amino-1-(5-phospho-beta-D-ribosyl)imidazole + ADP + phosphate + H(+). It functions in the pathway purine metabolism; IMP biosynthesis via de novo pathway; 5-amino-1-(5-phospho-D-ribosyl)imidazole from N(2)-formyl-N(1)-(5-phospho-D-ribosyl)glycinamide: step 2/2. In Streptococcus pyogenes serotype M28 (strain MGAS6180), this protein is Phosphoribosylformylglycinamidine cyclo-ligase.